The primary structure comprises 337 residues: tRNA N6-adenosine threonylcarbamoyltransferase (337 aa).

The Fe cation site is built by histidine 107 and histidine 111. Substrate is bound by residues 129-133 (LISGG), aspartate 162, glycine 175, and asparagine 271. Aspartate 299 is a binding site for Fe cation.

The protein belongs to the KAE1 / TsaD family. The cofactor is Fe(2+).

Its subcellular location is the cytoplasm. The catalysed reaction is L-threonylcarbamoyladenylate + adenosine(37) in tRNA = N(6)-L-threonylcarbamoyladenosine(37) in tRNA + AMP + H(+). Its function is as follows. Required for the formation of a threonylcarbamoyl group on adenosine at position 37 (t(6)A37) in tRNAs that read codons beginning with adenine. Is involved in the transfer of the threonylcarbamoyl moiety of threonylcarbamoyl-AMP (TC-AMP) to the N6 group of A37, together with TsaE and TsaB. TsaD likely plays a direct catalytic role in this reaction. This chain is tRNA N6-adenosine threonylcarbamoyltransferase, found in Sulfurovum sp. (strain NBC37-1).